A 318-amino-acid polypeptide reads, in one-letter code: Bis(5'-nucleosyl)-tetraphosphatase, symmetrical (318 aa).

Positions 269–318 (PGREVTGPAPVARAPRRPRERQGRQRSRGNRGNAGNAAAGPKPSVDTPQD) are disordered. The segment covering 282–297 (APRRPRERQGRQRSRG) has biased composition (basic residues). Residues 298–311 (NRGNAGNAAAGPKP) are compositionally biased toward low complexity.

Belongs to the Ap4A hydrolase family.

It carries out the reaction P(1),P(4)-bis(5'-adenosyl) tetraphosphate + H2O = 2 ADP + 2 H(+). In terms of biological role, hydrolyzes diadenosine 5',5'''-P1,P4-tetraphosphate to yield ADP. The chain is Bis(5'-nucleosyl)-tetraphosphatase, symmetrical from Xanthomonas euvesicatoria pv. vesicatoria (strain 85-10) (Xanthomonas campestris pv. vesicatoria).